Here is a 299-residue protein sequence, read N- to C-terminus: Mitochondrial 2-oxodicarboxylate carrier (299 aa).

Solcar repeat units follow at residues 11 to 100 (REAS…YKKL), 107 to 196 (SPAL…VKNM), and 205 to 294 (LEFL…TYSW). The next 6 membrane-spanning stretches (helical) occupy residues 17 to 37 (IVAG…LDVV), 70 to 89 (FGFY…KRAV), 113 to 133 (TIAG…FEVV), 167 to 187 (GLNK…MVYF), 205 to 225 (LEFL…SVIN), and 277 to 297 (LGPG…WLQE).

It belongs to the mitochondrial carrier (TC 2.A.29) family.

The protein localises to the mitochondrion inner membrane. It catalyses the reaction 2-oxoadipate(in) + 2-oxoglutarate(out) = 2-oxoadipate(out) + 2-oxoglutarate(in). The enzyme catalyses hexanedioate(in) + 2-oxoglutarate(out) = hexanedioate(out) + 2-oxoglutarate(in). It carries out the reaction L-2-aminoadipate(in) + 2-oxoglutarate(out) = L-2-aminoadipate(out) + 2-oxoglutarate(in). The catalysed reaction is glutarate(in) + 2-oxoglutarate(out) = glutarate(out) + 2-oxoglutarate(in). It catalyses the reaction 2-oxoheptanedioate(in) + 2-oxoglutarate(out) = 2-oxoheptanedioate(out) + 2-oxoglutarate(in). The enzyme catalyses heptanedioate(in) + 2-oxoglutarate(out) = heptanedioate(out) + 2-oxoglutarate(in). It carries out the reaction citrate(in) + 2-oxoglutarate(out) = citrate(out) + 2-oxoglutarate(in). Transports dicarboxylates across the inner membranes of mitochondria by a counter-exchange mechanism. Can transport 2-oxoadipate (2-oxohexanedioate), 2-oxoglutarate, adipate (hexanedioate), glutarate, and to a lesser extent, pimelate (heptanedioate), 2-oxopimelate (2-oxoheptanedioate), 2-aminoadipate (2-aminohexanedioate), oxaloacetate, and citrate. Plays a central role in catabolism of lysine, hydroxylysine, and tryptophan, by transporting common metabolite intermediates (such as 2-oxoadipate) into the mitochondria, where it is converted into acetyl-CoA and can enter the citric acid (TCA) cycle. In Pongo abelii (Sumatran orangutan), this protein is Mitochondrial 2-oxodicarboxylate carrier (SLC25A21).